The following is a 430-amino-acid chain: Purine nucleoside phosphorylase LACC1 (430 aa).

An N6-acetyllysine modification is found at Lys247. Residues His250, Cys284, and His301 each contribute to the Zn(2+) site.

This sequence belongs to the purine nucleoside phosphorylase YfiH/LACC1 family. Interacts with FASN. Interacts with SDHA. Interacts with ATF6, EIF2AK3 and ERN1. Phosphorylated on tyrosine residues. As to expression, ubiquitously expressed, with higher expression levels in immune-related tissues such as lymph nodes and spleen. Expressed in both intestinal and peripheral myeloid-derived cells.

It is found in the cytoplasm. The protein localises to the nucleus. Its subcellular location is the endoplasmic reticulum. It localises to the peroxisome. It carries out the reaction adenosine + phosphate = alpha-D-ribose 1-phosphate + adenine. The enzyme catalyses inosine + phosphate = alpha-D-ribose 1-phosphate + hypoxanthine. It catalyses the reaction guanosine + phosphate = alpha-D-ribose 1-phosphate + guanine. The catalysed reaction is S-methyl-5'-thioadenosine + phosphate = 5-(methylsulfanyl)-alpha-D-ribose 1-phosphate + adenine. It carries out the reaction adenosine + H2O + H(+) = inosine + NH4(+). Purine nucleoside enzyme that catalyzes the phosphorolysis of adenosine, guanosine and inosine nucleosides, yielding D-ribose 1-phosphate and the respective free bases, adenine, guanine and hypoxanthine. Also catalyzes the phosphorolysis of S-methyl-5'-thioadenosine into adenine and S-methyl-5-thio-alpha-D-ribose 1-phosphate. Also has adenosine deaminase activity. Acts as a regulator of innate immunity in macrophages by modulating the purine nucleotide metabolism, thereby regulating the metabolic function and bioenergetic state of macrophages. Enables a purine nucleotide cycle between adenosine and inosine monophosphate and adenylosuccinate that prevents cytoplasmic acidification and balances the cytoplasmic-mitochondrial redox interface. The purine nucleotide cycle consumes aspartate and releases fumarate in a manner involving fatty acid oxidation and ATP-citrate lyase activity. Participates in pattern recognition receptor (PRR)-induced cytokines in macrophages: associates with the NOD2-signaling complex and promotes optimal NOD2-induced signaling, cytokine secretion and bacterial clearance. Localizes to the endoplasmic reticulum upon PRR stimulation of macrophages and associates with endoplasmic reticulum-stress sensors, promoting the endoplasmic reticulum unfolded protein response (UPR). Does not show laccase activity. The polypeptide is Purine nucleoside phosphorylase LACC1 (Homo sapiens (Human)).